The following is a 1190-amino-acid chain: Plakophilin-4 (1190 aa).

The disordered stretch occupies residues 1–32 (MPAPEQGSLVEEGQPQTHQEAVSTGPGMEPET). The stretch at 36-63 (TILASVKEQELQFQRLTRELEVERQIVA) forms a coiled coil. Residues 73–347 (AESPSIASTS…KRSGMTAVPQ (275 aa)) form a disordered region. Phosphoserine is present on Ser75. Over residues 77–86 (SIASTSSTEK) the composition is skewed to polar residues. Residue Thr84 is modified to Phosphothreonine. Phosphoserine occurs at positions 106, 132, 136, and 139. Polar residues-rich tracts occupy residues 138–156 (GSLGNSRSSTQMNSYSDSG), 163–203 (FHNS…QPSV), and 213–229 (SVPSRAQSPSYVTSTGV). Residues Ser220, Ser230, and Ser235 each carry the phosphoserine modification. The segment covering 230–241 (SPSRGSLRTSLG) has biased composition (low complexity). Over residues 247-266 (PSVTDSRPLNPSAYSSSTLP) the composition is skewed to polar residues. 2 positions are modified to omega-N-methylarginine: Arg253 and Arg269. 5 positions are modified to phosphoserine: Ser272, Ser280, Ser313, Ser326, and Ser336. Polar residues predominate over residues 289-323 (SVTSRQTSNPNGPVPQYQTTTRVGSPLTLTDAQTR). A compositionally biased stretch (low complexity) spans 324–337 (VASPSQGQVGSSSP). Position 371 is a phosphotyrosine (Tyr371). Residues Ser391, Ser402, and Ser405 each carry the phosphoserine modification. Thr411 bears the Phosphothreonine mark. Tyr414 is subject to Phosphotyrosine. Residues Ser421, Ser426, and Ser437 each carry the phosphoserine modification. Residue Tyr477 is modified to Phosphotyrosine. A phosphoserine mark is found at Ser509, Ser511, and Ser514. 3 ARM repeats span residues 517 to 556 (KDPREFAWRDPELPEVIHMLQHQFPSVQANAAAYLQHLCF), 559 to 598 (NKVKMEVYRLGGIKHLVDLLDHRVLEVQKNACGALRNLVF), and 603 to 643 (DENK…NLSS). Residues 772–781 (GKESPSKDSE) show a composition bias toward basic and acidic residues. The segment at 772 to 809 (GKESPSKDSEPSCWGKKKKKKKRTPQEDQWDGVGPIPG) is disordered. Phosphoserine is present on Ser775. One copy of the ARM 4 repeat lies at 861-900 (AYIRAAVRKEKGLPILVELLRMDNDRVVSSVATALRNMAL). Thr1012 and Thr1016 each carry phosphothreonine. Phosphoserine is present on residues Ser1044, Ser1090, Ser1099, and Ser1133.

This sequence belongs to the beta-catenin family. Interacts (via the C-terminus) with FRMPD2 (via the PDZ 2 domain). Interacts with PDZD2. Interacts with RHOA; the interaction is detected at the midbody. Interacts with ECT2; the interaction is detected at the midbody. Interacts with CCDC85B.

Its subcellular location is the cell junction. It is found in the desmosome. It localises to the cytoplasm. The protein localises to the cytoskeleton. The protein resides in the spindle. Its subcellular location is the spindle pole. It is found in the midbody. It localises to the cell membrane. In terms of biological role, plays a role as a regulator of Rho activity during cytokinesis. May play a role in junctional plaques. This Mus musculus (Mouse) protein is Plakophilin-4 (Pkp4).